Consider the following 248-residue polypeptide: uncharacterized protein (248 aa).

A helical membrane pass occupies residues 30 to 50 (LIALAIFIGLIAIFMFGCKAA). Disordered regions lie at residues 59-91 (NRDTTQSDTDVIYPRDDPRASRSHQNFGFMDPP) and 208-248 (TTES…VSTR). Composition is skewed to polar residues over residues 210-220 (ESPAPAQSTSN) and 239-248 (SLHNETVSTR).

It is found in the membrane. This is an uncharacterized protein from Caenorhabditis elegans.